We begin with the raw amino-acid sequence, 208 residues long: Large ribosomal subunit protein uL4 (208 aa).

Positions 47–84 (ARAARERSDVARTGKKFGRQKGGGTARHGDRRAPVFIG) are disordered. Basic and acidic residues predominate over residues 49 to 58 (AARERSDVAR).

This sequence belongs to the universal ribosomal protein uL4 family. Part of the 50S ribosomal subunit.

Its function is as follows. One of the primary rRNA binding proteins, this protein initially binds near the 5'-end of the 23S rRNA. It is important during the early stages of 50S assembly. It makes multiple contacts with different domains of the 23S rRNA in the assembled 50S subunit and ribosome. Functionally, forms part of the polypeptide exit tunnel. The chain is Large ribosomal subunit protein uL4 from Rhizorhabdus wittichii (strain DSM 6014 / CCUG 31198 / JCM 15750 / NBRC 105917 / EY 4224 / RW1) (Sphingomonas wittichii).